Reading from the N-terminus, the 119-residue chain is MMNKKDARLRRARQTRAKIAELKVNRLTVFRTNSNIYAQVFSECGTKVLASASTVEAEVRKELEGKGATAAAATVVGKRIAEKAKAAGVETVAFDRAGFRFHGRVKALADAAREAGLKF.

The protein belongs to the universal ribosomal protein uL18 family. In terms of assembly, part of the 50S ribosomal subunit; part of the 5S rRNA/L5/L18/L25 subcomplex. Contacts the 5S and 23S rRNAs.

Functionally, this is one of the proteins that bind and probably mediate the attachment of the 5S RNA into the large ribosomal subunit, where it forms part of the central protuberance. This Cupriavidus taiwanensis (strain DSM 17343 / BCRC 17206 / CCUG 44338 / CIP 107171 / LMG 19424 / R1) (Ralstonia taiwanensis (strain LMG 19424)) protein is Large ribosomal subunit protein uL18.